Here is a 168-residue protein sequence, read N- to C-terminus: Small ribosomal subunit protein uS5 (168 aa).

The region spanning 11 to 74 is the S5 DRBM domain; the sequence is YSEKVVKIDR…EAAKKHLVKI (64 aa).

This sequence belongs to the universal ribosomal protein uS5 family. Part of the 30S ribosomal subunit. Contacts proteins S4 and S8.

With S4 and S12 plays an important role in translational accuracy. Its function is as follows. Located at the back of the 30S subunit body where it stabilizes the conformation of the head with respect to the body. This is Small ribosomal subunit protein uS5 from Leptospira borgpetersenii serovar Hardjo-bovis (strain JB197).